Consider the following 627-residue polypeptide: Serine/threonine-protein phosphatase 2A 56 kDa regulatory subunit delta 2 isoform (627 aa).

Residues 1–37 are disordered; sequence MKGLRSKFVKALSLKDEQGSHKNGHSKSHYISKNGSY.

This sequence belongs to the phosphatase 2A regulatory subunit B family. PP2A consists of a common heterodimeric core enzyme, composed of a 36 kDa catalytic subunit (subunit C) and a 65 kDa constant regulatory subunit (PR65 or subunit A), that associates with a variety of regulatory subunits. Proteins that associate with the core dimer include three families of regulatory subunits B (the R2/B/PR55/B55, R3/B''/PR72/PR130/PR59 and R5/B'/B56 families), the 48 kDa variable regulatory subunit, viral proteins, and cell signaling molecules.

Its subcellular location is the cytoplasm. The protein resides in the cell tip. Functionally, the B regulatory subunit might modulate substrate selectivity and catalytic activity, and might also direct the localization of the catalytic enzyme to a particular subcellular compartment. Has a role in cell shape control and septum formation. The polypeptide is Serine/threonine-protein phosphatase 2A 56 kDa regulatory subunit delta 2 isoform (par2) (Schizosaccharomyces pombe (strain 972 / ATCC 24843) (Fission yeast)).